We begin with the raw amino-acid sequence, 330 residues long: Probable inactive heme oxygenase 2, chloroplastic (330 aa).

Composition is skewed to low complexity over residues 1–13 (MPLA…SAVV) and 56–69 (AAEA…VDEA). 3 disordered regions span residues 1 to 27 (MPLA…RARP), 50 to 82 (PSPP…YPRQ), and 107 to 156 (TTLK…LEGE). The transit peptide at 1–47 (MPLAAAVAASAVVPPRPPPPPPRRARPLRSFTGLILTRDLAALTVAR) directs the protein to the chloroplast. The segment covering 114–151 (TGAEEEVGDGVSEDASASEEEEEEEDDDDVVEEEEEGA) has biased composition (acidic residues).

Belongs to the heme oxygenase family.

It localises to the plastid. Its subcellular location is the chloroplast. Functionally, probable inactive heme oxygenase that may play a role in the regulation of phytochrome assembly and photomorphogenesis. This is Probable inactive heme oxygenase 2, chloroplastic (HO2) from Oryza sativa subsp. japonica (Rice).